A 149-amino-acid chain; its full sequence is Deoxyuridine 5'-triphosphate nucleotidohydrolase (149 aa).

Substrate-binding positions include Arg-68–Gly-70, Asn-81, and Leu-85–Asp-87.

It belongs to the dUTPase family. It depends on Mg(2+) as a cofactor.

It catalyses the reaction dUTP + H2O = dUMP + diphosphate + H(+). The protein operates within pyrimidine metabolism; dUMP biosynthesis; dUMP from dCTP (dUTP route): step 2/2. In terms of biological role, this enzyme is involved in nucleotide metabolism: it produces dUMP, the immediate precursor of thymidine nucleotides and it decreases the intracellular concentration of dUTP so that uracil cannot be incorporated into DNA. In Laribacter hongkongensis (strain HLHK9), this protein is Deoxyuridine 5'-triphosphate nucleotidohydrolase.